The sequence spans 300 residues: Ankyrin repeat domain-containing protein 54 (300 aa).

A disordered region spans residues 1–27 (MAAAAGDADDEPRSGHSSSEGECAVAP). The residue at position 2 (alanine 2) is an N-acetylalanine. Phosphoserine is present on residues serine 58 and serine 63. A Nuclear localization signal (NLS) motif is present at residues 99-117 (RRLGPTGKEVHALKRLRDS). ANK repeat units follow at residues 109 to 138 (HALK…DPCA), 142 to 171 (KGRT…DPNQ), 175 to 204 (LGNT…RVDA), and 208 to 244 (AGRT…IIHM). An LYN-binding region spans residues 141–241 (DKGRTALHFA…EAVRLEVKQI (101 aa)). The short motif at 283 to 293 (LLASFTSLSLQ) is the Nuclear export signal (NES) element.

Interacts (via ankyrin repeat region) with LYN (via SH3-domain) in an activation-independent status of LYN. Forms a multiprotein complex with LYN and HCLS1. Interacts with TSN2, VAV1, DBNL and LASP1.

The protein localises to the nucleus. Its subcellular location is the cytoplasm. The protein resides in the midbody. Its function is as follows. Plays an important role in regulating intracellular signaling events associated with erythroid terminal differentiation. The polypeptide is Ankyrin repeat domain-containing protein 54 (ANKRD54) (Homo sapiens (Human)).